The sequence spans 1094 residues: Protein phosphatase 2C and cyclic nucleotide-binding/kinase domain-containing protein (1094 aa).

The PPM-type phosphatase domain maps to 107–397 (RCSFLSQRGY…DDITIIVVHI (291 aa)). Residues D148, G149, D344, and D388 each coordinate Mn(2+). Residues 491 to 616 (LFRK…RSVD) and 617 to 758 (LLSR…RHSS) contribute to the a nucleoside 3',5'-cyclic phosphate site. The region spanning 785–1038 (TTCLSTTDCS…PESIKKHPWF (254 aa)) is the Protein kinase domain. ATP contacts are provided by residues 791-799 (TDCSEIGLV) and K811.

In the N-terminal section; belongs to the PP2C family. The protein in the C-terminal section; belongs to the protein kinase superfamily. AGC Ser/Thr protein kinase family. Mg(2+) is required as a cofactor. The cofactor is Mn(2+).

The catalysed reaction is O-phospho-L-seryl-[protein] + H2O = L-seryl-[protein] + phosphate. The enzyme catalyses O-phospho-L-threonyl-[protein] + H2O = L-threonyl-[protein] + phosphate. In Arabidopsis thaliana (Mouse-ear cress), this protein is Protein phosphatase 2C and cyclic nucleotide-binding/kinase domain-containing protein.